Reading from the N-terminus, the 404-residue chain is Tryptophan synthase beta chain (404 aa).

K94 is subject to N6-(pyridoxal phosphate)lysine.

It belongs to the TrpB family. In terms of assembly, tetramer of two alpha and two beta chains. Pyridoxal 5'-phosphate serves as cofactor.

It catalyses the reaction (1S,2R)-1-C-(indol-3-yl)glycerol 3-phosphate + L-serine = D-glyceraldehyde 3-phosphate + L-tryptophan + H2O. Its pathway is amino-acid biosynthesis; L-tryptophan biosynthesis; L-tryptophan from chorismate: step 5/5. In terms of biological role, the beta subunit is responsible for the synthesis of L-tryptophan from indole and L-serine. In Staphylococcus aureus (strain USA300), this protein is Tryptophan synthase beta chain.